The following is a 389-amino-acid chain: S-adenosylmethionine synthase (389 aa).

H17 contacts ATP. Position 19 (D19) interacts with Mg(2+). E45 serves as a coordination point for K(+). Residues E58 and Q101 each coordinate L-methionine. A flexible loop region spans residues 101–111 (QSPDISQGVTE). ATP contacts are provided by residues 168-170 (DSK), 234-235 (RF), D243, 249-250 (RK), A266, and K270. Position 243 (D243) interacts with L-methionine. Residue K274 participates in L-methionine binding.

It belongs to the AdoMet synthase family. As to quaternary structure, homotetramer; dimer of dimers. The cofactor is Mg(2+). It depends on K(+) as a cofactor.

The protein localises to the cytoplasm. It carries out the reaction L-methionine + ATP + H2O = S-adenosyl-L-methionine + phosphate + diphosphate. Its pathway is amino-acid biosynthesis; S-adenosyl-L-methionine biosynthesis; S-adenosyl-L-methionine from L-methionine: step 1/1. Catalyzes the formation of S-adenosylmethionine (AdoMet) from methionine and ATP. The overall synthetic reaction is composed of two sequential steps, AdoMet formation and the subsequent tripolyphosphate hydrolysis which occurs prior to release of AdoMet from the enzyme. This is S-adenosylmethionine synthase from Geobacter metallireducens (strain ATCC 53774 / DSM 7210 / GS-15).